A 142-amino-acid chain; its full sequence is Hemoglobin subunit alpha-A (142 aa).

The region spanning Val2 to Arg142 is the Globin domain. Residue His59 coordinates O2. His88 contacts heme b.

Belongs to the globin family. In terms of assembly, heterotetramer of two alpha chains and two beta chains. As to expression, red blood cells.

Involved in oxygen transport from the lung to the various peripheral tissues. The polypeptide is Hemoglobin subunit alpha-A (HBAA) (Anser indicus (Bar-headed goose)).